We begin with the raw amino-acid sequence, 317 residues long: ADIPOR-like receptor IZH2 (317 aa).

Over 1–78 the chain is Cytoplasmic; sequence MSTLLERTKS…TFKSLFYLHN (78 aa). The chain crosses the membrane as a helical span at residues 79 to 99; the sequence is ESVNIYSHLIPALGFFTVLLL. Topologically, residues 100–110 are extracellular; it reads DKSTIKVFATT. The helical transmembrane segment at 111–131 threads the bilayer; sequence TWLDHMVIDLFYSGAFACLIL. The Cytoplasmic portion of the chain corresponds to 132–153; it reads SSSFHCLKSHSLRIATLGNKLD. A helical membrane pass occupies residues 154-174; the sequence is YLGICILIVTSMVSILYYGYF. Residues 175–176 lie on the Extracellular side of the membrane; that stretch reads EK. A helical membrane pass occupies residues 177–197; sequence FSLFCLFALITVSFGIACSIV. Residues 198–212 are Cytoplasmic-facing; that stretch reads SLKDKFRKREWRPYR. Residues 213–233 form a helical membrane-spanning segment; sequence AGLFVCFGLSSIIPIFSGLYC. Residues 234 to 242 are Extracellular-facing; that stretch reads YSFSEIWTQ. A helical transmembrane segment spans residues 243-263; it reads IQLFWVLLGGVLYIIGAVLYG. The Cytoplasmic segment spans residues 264 to 276; that stretch reads MRFPEKICPGKFD. The chain crosses the membrane as a helical span at residues 277-297; sequence IWGHSHQLFHFLVVIAALCHL. Residues 298 to 317 are Extracellular-facing; that stretch reads RGLLNSYELVHIKMENGIVS.

Belongs to the ADIPOR family.

The protein localises to the membrane. Its function is as follows. Probable receptor, which is involved in metabolic pathways that regulate lipid metabolism such as fatty acid oxidation. The protein is ADIPOR-like receptor IZH2 (IZH2) of Saccharomyces cerevisiae (strain ATCC 204508 / S288c) (Baker's yeast).